A 435-amino-acid polypeptide reads, in one-letter code: Arginine biosynthesis bifunctional protein ArgJ, mitochondrial (435 aa).

Residues Thr-179, Lys-205, Thr-216, Glu-302, Asn-430, and Ser-435 each contribute to the substrate site. Residue Thr-216 is the Nucleophile of the active site.

This sequence belongs to the ArgJ family. In terms of assembly, heterodimer of an alpha and a beta chain. The alpha and beta chains are autoproteolytically processed from a single precursor protein within the mitochondrion.

It is found in the mitochondrion matrix. The catalysed reaction is N(2)-acetyl-L-ornithine + L-glutamate = N-acetyl-L-glutamate + L-ornithine. It carries out the reaction L-glutamate + acetyl-CoA = N-acetyl-L-glutamate + CoA + H(+). It functions in the pathway amino-acid biosynthesis; L-arginine biosynthesis; L-ornithine and N-acetyl-L-glutamate from L-glutamate and N(2)-acetyl-L-ornithine (cyclic): step 1/1. The protein operates within amino-acid biosynthesis; L-arginine biosynthesis; N(2)-acetyl-L-ornithine from L-glutamate: step 1/4. In terms of biological role, catalyzes two activities which are involved in the cyclic version of arginine biosynthesis: the synthesis of acetylglutamate from glutamate and acetyl-CoA, and of ornithine by transacetylation between acetylornithine and glutamate. The protein is Arginine biosynthesis bifunctional protein ArgJ, mitochondrial of Schizosaccharomyces japonicus (strain yFS275 / FY16936) (Fission yeast).